Consider the following 283-residue polypeptide: MLIIETTLILRREIKRLKQEGKRIALVPTMGNLHQGHLKLIEEARIHADVVIASIFVNPMQFDREADLANYPRTLQEDCELLRDKHVDIVFAPSAKEMYPNGMENQTIVEVPVLSSVLEGASRPGHFRGVTTVVSKLFNLVQPDVALFGEKDYQQLQIIKKMVSDLCFDISIIPVPIVRDKTGLAFSSRNRLLSDNEKQQAPVLYQAMQQIAEQLKSGNLDVNQLLQTAKATLEQQGFRADECFICDAQTLAPLSEESRCAVILMAAWLGNTRLIDSQQVSLV.

30–37 contributes to the ATP binding site; sequence MGNLHQGH. The active-site Proton donor is histidine 37. Glutamine 61 provides a ligand contact to (R)-pantoate. Glutamine 61 serves as a coordination point for beta-alanine. 149–152 lines the ATP pocket; the sequence is GEKD. Glutamine 155 serves as a coordination point for (R)-pantoate. Residues valine 178 and 186 to 189 each bind ATP; that span reads FSSR.

Belongs to the pantothenate synthetase family. Homodimer.

It localises to the cytoplasm. It catalyses the reaction (R)-pantoate + beta-alanine + ATP = (R)-pantothenate + AMP + diphosphate + H(+). It participates in cofactor biosynthesis; (R)-pantothenate biosynthesis; (R)-pantothenate from (R)-pantoate and beta-alanine: step 1/1. Functionally, catalyzes the condensation of pantoate with beta-alanine in an ATP-dependent reaction via a pantoyl-adenylate intermediate. The protein is Pantothenate synthetase of Proteus mirabilis (strain HI4320).